The following is a 459-amino-acid chain: Anthocyanidin 3-O-glucoside 2''-O-glucosyltransferase (459 aa).

The active-site Proton acceptor is the His-20. His-20 contacts an anthocyanidin. Catalysis depends on Asp-117, which acts as the Charge relay. UDP-alpha-D-glucose-binding residues include Thr-138, Val-335, Gln-337, His-352, Trp-355, Ser-357, and Glu-360. An anthocyanidin is bound at residue Gly-375. Residues Asp-376 and Gln-377 each contribute to the UDP-alpha-D-glucose site.

It belongs to the UDP-glycosyltransferase family.

It carries out the reaction an anthocyanidin 3-O-beta-D-glucoside + UDP-alpha-D-glucose = an anthocyanidin 3-O-sophoroside + UDP + 2 H(+). It functions in the pathway pigment biosynthesis; anthocyanin biosynthesis. Functionally, glycosyltransferase that mediates the glucosylation of anthocyanidin 3-O-glucosides to yield anthocyanidin 3-O-sophorosides. 3-O-sophoroside derivatives are required for the color of flowers. The polypeptide is Anthocyanidin 3-O-glucoside 2''-O-glucosyltransferase (3GGT) (Ipomoea purpurea (Common morning glory)).